The chain runs to 380 residues: Cytochrome b (380 aa).

The next 4 helical transmembrane spans lie at 33 to 53 (FGSLLGLCLVTQILTGLFLAM), 77 to 98 (WLIRNIHANGASFFFICLYLHI), 113 to 133 (WNIGVVLFLLVMMTAFVGYVL), and 178 to 198 (FFAFHFLFPFIIVALTVLHFF). His-83 and His-97 together coordinate heme b. The heme b site is built by His-182 and His-196. Position 201 (His-201) interacts with a ubiquinone. 4 consecutive transmembrane segments (helical) span residues 226-246 (YKDLFGLVLLLLALSSLSFFS), 288-308 (LGGVLALLASILILMLVPILH), 320-340 (LTQLLFWILVADVMILTWIGG), and 347-367 (FIAVGQIASVLYFTLFLILIP).

It belongs to the cytochrome b family. As to quaternary structure, the cytochrome bc1 complex contains 3 respiratory subunits (MT-CYB, CYC1 and UQCRFS1), 2 core proteins (UQCRC1 and UQCRC2) and probably 6 low-molecular weight proteins. Requires heme b as cofactor.

It localises to the mitochondrion inner membrane. Functionally, component of the ubiquinol-cytochrome c reductase complex (complex III or cytochrome b-c1 complex) that is part of the mitochondrial respiratory chain. The b-c1 complex mediates electron transfer from ubiquinol to cytochrome c. Contributes to the generation of a proton gradient across the mitochondrial membrane that is then used for ATP synthesis. The polypeptide is Cytochrome b (mt-cyb) (Zenopsis nebulosa (Mirror dory)).